The following is a 632-amino-acid chain: tRNA endonuclease VMS1 (632 aa).

The segment at 72 to 96 (MRCSVCQMSFDSRNEQKAHYQTDYH) adopts a C2H2-type zinc-finger fold. The segment at 123–155 (HGIKSEDENSGGEQTSSDHEESEEASDRDPDLQ) is disordered. A VLRF1 domain is found at 232–392 (PMAISALFMV…KKAWCELSYL (161 aa)). Residue glutamine 295 is part of the active site. 2 ANK repeats span residues 470–500 (LTPTMLHYASQQGMKQMALILLSNIKCDPTI) and 504–530 (LGRTAWDLNRNDDVRHAFQIARYNLGE). Coiled coils occupy residues 544-582 (LSREQVDEINEKKKAIENEKAEKLIKLELEAAKEKQRFA) and 608-632 (TDEQRRRLMREQRARAAEERMKKKY). The span at 578–589 (KQRFAKDAERGP) shows a compositional bias: basic and acidic residues. Positions 578–632 (KQRFAKDAERGPGKKLTNIPSIQQQNLNSLTDEQRRRLMREQRARAAEERMKKKY) are disordered. Polar residues predominate over residues 595–608 (NIPSIQQQNLNSLT). Residues 609–632 (DEQRRRLMREQRARAAEERMKKKY) show a composition bias toward basic and acidic residues.

This sequence belongs to the ANKZF1/VMS1 family. In terms of assembly, associates with 60S ribosomal subunit. Interacts with CDC48. Interacts with NPL4.

The protein resides in the cytoplasm. The protein localises to the mitochondrion. Its subcellular location is the endoplasmic reticulum membrane. In terms of biological role, endonuclease that cleaves polypeptidyl-tRNAs downstream of the ribosome-associated quality control (RQC) pathway to release incompletely synthesized polypeptides for degradation. The RQC pathway disassembles aberrantly stalled translation complexes to recycle or degrade the constituent parts. VMS1 acts downstream disassembly of stalled ribosomes and specifically cleaves off the terminal 3'-CCA nucleotides universal to all tRNAs from polypeptidyl-tRNAs, releasing (1) ubiquitinated polypeptides from 60S ribosomal subunit for degradation by the ERAD pathway and (2) cleaved tRNAs for recycling. Component of an evolutionarily conserved system for ubiquitin-mediated mitochondria-associated protein degradation (MAD), which is necessary to maintain mitochondrial, cellular, and organismal viability. The polypeptide is tRNA endonuclease VMS1 (Saccharomyces cerevisiae (strain ATCC 204508 / S288c) (Baker's yeast)).